We begin with the raw amino-acid sequence, 118 residues long: Large ribosomal subunit protein bL20 (118 aa).

This sequence belongs to the bacterial ribosomal protein bL20 family.

Binds directly to 23S ribosomal RNA and is necessary for the in vitro assembly process of the 50S ribosomal subunit. It is not involved in the protein synthesizing functions of that subunit. The protein is Large ribosomal subunit protein bL20 of Trichormus variabilis (strain ATCC 29413 / PCC 7937) (Anabaena variabilis).